We begin with the raw amino-acid sequence, 183 residues long: Protein jagunal homolog 1 (183 aa).

Residues 1–39 (MASRAGPRAAGTDGSDFQHRERVAMHYQMSVTLKYEIKK) lie on the Cytoplasmic side of the membrane. Ser-3 bears the Phosphoserine mark. The chain crosses the membrane as a helical span at residues 40–60 (LIYVHLVIWLLLVAKMSVGHL). At 61-71 (RLLSHDQVAMP) the chain is on the lumenal side. The helical transmembrane segment at 72 to 92 (YQWEYPYLLSIVPSVLGLLSF) threads the bilayer. Residues 93–96 (PRNN) lie on the Cytoplasmic side of the membrane. The helical transmembrane segment at 97-117 (ISYLVLSMISMGLFSIAPLIY) threads the bilayer. Residues 118-137 (GSMEMFPAAQQLYRHGKAYR) are Lumenal-facing. The chain crosses the membrane as a helical span at residues 138–158 (FLFGFSAVSVMYLVLVLAVQV). Topologically, residues 159–183 (HAWQLYYSKKLLDSWFTSTQEKKRK) are cytoplasmic.

Belongs to the jagunal family. As to quaternary structure, interacts with COPA, COPB2 and COPG2.

It is found in the endoplasmic reticulum membrane. In terms of biological role, endoplasmic reticulum transmembrane protein involved in vesicle-mediated transport, which is required for neutrophil function. Required for vesicle-mediated transport; it is however unclear whether it is involved in early secretory pathway or intracellular protein transport. Acts as a regulator of neutrophil function, probably via its role in vesicle-mediated transport: required for defense against fungal pathogens and for granulocyte colony-stimulating factor (GM-CSF) signaling pathway; possibly by regulating glycosylation and/or targeting of proteins contributing to the viability and migration of neutrophils. This chain is Protein jagunal homolog 1, found in Mus musculus (Mouse).